The following is a 141-amino-acid chain: Succinate dehydrogenase [ubiquinone] cytochrome b small subunit 2 (141 aa).

The transit peptide at 1-24 (MSLIRCTTSKALKFRQLLKMAART) directs the protein to the mitochondrion. The Mitochondrial matrix portion of the chain corresponds to 25-44 (SVTTPVSREPFSIEDHSLHF). A helical membrane pass occupies residues 45-63 (KIERYWAAGMIPLIPTAYF). Residues 64-68 (IHTPA) are Mitochondrial intermembrane-facing. A helical transmembrane segment spans residues 69–89 (MDAVLTVAIVLHVHWGIAGVV). Residue histidine 80 coordinates heme b. The Mitochondrial matrix portion of the chain corresponds to 90–104 (SDYARPFVIGDTLAR). Tyrosine 92 contacts a ubiquinone. The chain crosses the membrane as a helical span at residues 105–126 (VARASVYIITVILLASLLHFNN). Residues 127–141 (SDVGLTKAFEMVWSL) lie on the Mitochondrial intermembrane side of the membrane.

It belongs to the CybS family. In terms of assembly, component of the mitochondrial electron transport chain complex II composed of four subunits: a flavoprotein (Fp), an iron-sulfur protein (Ip), and a large cytochrome b (CybL) subunit and a small cytochrome b (CybS) subunit. There are 2 developmental stage-specific forms of complex II which have the Ip and CybL subunits in common. Complex II from the free-living larvae (aerobic environment) acts as a succinate dehydrogenase and is composed of the common subunit Ip and CybL and the stage specific subunits FpL and CybSL. Complex II from parasitic larvae and adults (anaerobic environment) acts as a fumarate reductase and is composed of the common subunit Ip and CybL and the stage specific subunits FpA and CybSA. Heme b is required as a cofactor.

Its subcellular location is the mitochondrion inner membrane. Its pathway is carbohydrate metabolism; tricarboxylic acid cycle; fumarate from succinate (eukaryal route): step 1/1. Its function is as follows. Membrane-bound small subunit (CybS) of the mitochondrial electron transport chain complex II, which together with the membrane-bound large subunit (CybL), anchor the catalytic subunits to the inner mitochondria membrane. During the free-living egg-larvae stages, which occur in an aerobic environment, complex II acts as a succinate dehydrogenase by transferring electrons from succinate to ubiquinone. This Ascaris suum (Pig roundworm) protein is Succinate dehydrogenase [ubiquinone] cytochrome b small subunit 2.